A 196-amino-acid chain; its full sequence is Proteasome subunit beta 2 (196 aa).

Residues 1–6 (MEELPS) constitute a propeptide, removed in mature form; by autocatalysis. The active-site Nucleophile is threonine 7.

Belongs to the peptidase T1B family. The 20S proteasome core is composed of 14 alpha and 14 beta subunits that assemble into four stacked heptameric rings, resulting in a barrel-shaped structure. The two inner rings, each composed of seven catalytic beta subunits, are sandwiched by two outer rings, each composed of seven alpha subunits. The catalytic chamber with the active sites is on the inside of the barrel. Has a gated structure, the ends of the cylinder being occluded by the N-termini of the alpha-subunits. Is capped at one or both ends by the proteasome regulatory ATPase, PAN.

It is found in the cytoplasm. It carries out the reaction Cleavage of peptide bonds with very broad specificity.. With respect to regulation, the formation of the proteasomal ATPase PAN-20S proteasome complex, via the docking of the C-termini of PAN into the intersubunit pockets in the alpha-rings, triggers opening of the gate for substrate entry. Interconversion between the open-gate and close-gate conformations leads to a dynamic regulation of the 20S proteasome proteolysis activity. Its function is as follows. Component of the proteasome core, a large protease complex with broad specificity involved in protein degradation. This is Proteasome subunit beta 2 from Metallosphaera sedula (strain ATCC 51363 / DSM 5348 / JCM 9185 / NBRC 15509 / TH2).